A 321-amino-acid chain; its full sequence is Olfactory receptor 51V1 (321 aa).

Over 1-34 (MFLSSRMITSVSPSTSTNSSFLLTGFSGMEQQYP) the chain is Extracellular. N-linked (GlcNAc...) asparagine glycosylation occurs at Asn18. A helical membrane pass occupies residues 35–55 (WLSIPFSSIYAMVLLGNCMVL). Residues 56 to 63 (HVIWTEPS) lie on the Cytoplasmic side of the membrane. A helical transmembrane segment spans residues 64-84 (LHQPMFYFLSMLALTDLCMGL). Residues 85–108 (STVYTVLGILWGIIREISLDSCIA) are Extracellular-facing. Cys106 and Cys188 are oxidised to a cystine. The chain crosses the membrane as a helical span at residues 109–129 (QSYFIHGLSFMESSVLLTMAF). Topologically, residues 130–148 (DRYIAICNPLRYSSILTNS) are cytoplasmic. The chain crosses the membrane as a helical span at residues 149 to 169 (RIIKIGLTIIGRSFFFITPPI). At 170 to 205 (ICLKFFNYCHFHILSHSFCLHQDLLRLACSDIRFNS) the chain is on the extracellular side. Residues 206–226 (YYALMLVICILLLDAILILFS) traverse the membrane as a helical segment. Topologically, residues 227–246 (YILILKSVLAVASQEERHKL) are cytoplasmic. A helical membrane pass occupies residues 247 to 267 (FQTCISHICAVLVFYIPIISL). Over 268–282 (TMVHRFGKHLSPVAH) the chain is Extracellular. The helical transmembrane segment at 283–303 (VLIGNIYILFPPLMNPIIYSV) threads the bilayer. Topologically, residues 304–321 (KTQQIHTRMLRLFSLKRY) are cytoplasmic.

It belongs to the G-protein coupled receptor 1 family.

It localises to the cell membrane. Its function is as follows. Odorant receptor. This is Olfactory receptor 51V1 (OR51V1) from Homo sapiens (Human).